Reading from the N-terminus, the 146-residue chain is Hemoglobin subunit beta-1 (146 aa).

A Globin domain is found at 2–146 (GLTAHDRQLI…IADALGKGYH (145 aa)). Heme b is bound by residues H63 and H92.

This sequence belongs to the globin family. As to quaternary structure, heterotetramer of two alpha chains and two beta chains. As to expression, red blood cells.

In terms of biological role, involved in oxygen transport from the lung to the various peripheral tissues. The chain is Hemoglobin subunit beta-1 (hbb1) from Xenopus borealis (Kenyan clawed frog).